We begin with the raw amino-acid sequence, 339 residues long: Heat-inducible transcription repressor HrcA (339 aa).

This sequence belongs to the HrcA family.

In terms of biological role, negative regulator of class I heat shock genes (grpE-dnaK-dnaJ and groELS operons). Prevents heat-shock induction of these operons. The sequence is that of Heat-inducible transcription repressor HrcA from Nitrosospira multiformis (strain ATCC 25196 / NCIMB 11849 / C 71).